A 468-amino-acid polypeptide reads, in one-letter code: ATP synthase subunit beta 3 (468 aa).

An ATP-binding site is contributed by 155–162 (GGAGVGKT).

Belongs to the ATPase alpha/beta chains family. F-type ATPases have 2 components, CF(1) - the catalytic core - and CF(0) - the membrane proton channel. CF(1) has five subunits: alpha(3), beta(3), gamma(1), delta(1), epsilon(1). CF(0) has three main subunits: a(1), b(2) and c(9-12). The alpha and beta chains form an alternating ring which encloses part of the gamma chain. CF(1) is attached to CF(0) by a central stalk formed by the gamma and epsilon chains, while a peripheral stalk is formed by the delta and b chains.

Its subcellular location is the cell inner membrane. It catalyses the reaction ATP + H2O + 4 H(+)(in) = ADP + phosphate + 5 H(+)(out). Produces ATP from ADP in the presence of a proton gradient across the membrane. The catalytic sites are hosted primarily by the beta subunits. In Syntrophotalea carbinolica (strain DSM 2380 / NBRC 103641 / GraBd1) (Pelobacter carbinolicus), this protein is ATP synthase subunit beta 3.